The sequence spans 422 residues: Tyrosine-protein kinase STYK1 (422 aa).

A helical transmembrane segment spans residues 26-46; it reads VIIVPTLLVTIFLILLGVILW. In terms of domain architecture, Protein kinase spans 114–384; the sequence is SEVLEQICSG…ELRLRLEAAI (271 aa). Residues 120 to 128 and Lys147 each bind ATP; that span reads ICSGSCGPI. The active-site Proton acceptor is Asp251.

It belongs to the protein kinase superfamily. Tyr protein kinase family. In terms of tissue distribution, widely expressed. Highly expressed in brain, placenta and prostate. Expressed in tumor cells such as hepatoma cells L-02, cervix carcinoma cells HeLa, ovary cancer cells Ho8910 and chronic myelogenous leukemia cells K-562, but not in other tumor cells such as epidermoid carcinoma (A-431). Undetectable in most normal lung tissues, widely expressed in lung cancers.

The protein localises to the membrane. It catalyses the reaction L-tyrosyl-[protein] + ATP = O-phospho-L-tyrosyl-[protein] + ADP + H(+). Probable tyrosine protein-kinase, which has strong transforming capabilities on a variety of cell lines. When overexpressed, it can also induce tumor cell invasion as well as metastasis in distant organs. May act by activating both MAP kinase and phosphatidylinositol 3'-kinases (PI3K) pathways. This is Tyrosine-protein kinase STYK1 (STYK1) from Homo sapiens (Human).